The sequence spans 256 residues: Ubiquinone biosynthesis O-methyltransferase (256 aa).

The S-adenosyl-L-methionine site is built by Arg44, Gly80, Asp101, and Met144.

Belongs to the methyltransferase superfamily. UbiG/COQ3 family.

The enzyme catalyses a 3-demethylubiquinol + S-adenosyl-L-methionine = a ubiquinol + S-adenosyl-L-homocysteine + H(+). It carries out the reaction a 3-(all-trans-polyprenyl)benzene-1,2-diol + S-adenosyl-L-methionine = a 2-methoxy-6-(all-trans-polyprenyl)phenol + S-adenosyl-L-homocysteine + H(+). It functions in the pathway cofactor biosynthesis; ubiquinone biosynthesis. Functionally, O-methyltransferase that catalyzes the 2 O-methylation steps in the ubiquinone biosynthetic pathway. This chain is Ubiquinone biosynthesis O-methyltransferase, found in Methylocella silvestris (strain DSM 15510 / CIP 108128 / LMG 27833 / NCIMB 13906 / BL2).